Here is a 450-residue protein sequence, read N- to C-terminus: NADP-specific glutamate dehydrogenase (450 aa).

Lysine 114 is a catalytic residue.

Belongs to the Glu/Leu/Phe/Val dehydrogenases family. As to quaternary structure, homohexamer.

The catalysed reaction is L-glutamate + NADP(+) + H2O = 2-oxoglutarate + NH4(+) + NADPH + H(+). This chain is NADP-specific glutamate dehydrogenase (gdhA), found in Botryotinia fuckeliana (Noble rot fungus).